We begin with the raw amino-acid sequence, 304 residues long: Deoxyribonuclease-1-like 1 (304 aa).

An N-terminal signal peptide occupies residues 1-24 (MPYMAMHGLTVALLLIFLAGGTEA). Asn92 is a glycosylation site (N-linked (GlcNAc...) asparagine). Residue Glu103 is part of the active site. Asn123 is a glycosylation site (N-linked (GlcNAc...) asparagine). His154 is an active-site residue. Cys193 and Cys230 are disulfide-bonded. Asn229 carries N-linked (GlcNAc...) asparagine glycosylation.

Belongs to the DNase I family.

The protein localises to the endoplasmic reticulum. This chain is Deoxyribonuclease-1-like 1 (DNASE1L1), found in Cricetulus griseus (Chinese hamster).